Consider the following 231-residue polypeptide: Ribosomal RNA small subunit methyltransferase nep-1 (231 aa).

Residues M161, G188, G193, and I206 to L211 each bind S-adenosyl-L-methionine.

Belongs to the class IV-like SAM-binding methyltransferase superfamily. RNA methyltransferase NEP1 family. In terms of assembly, homodimer.

The protein localises to the nucleus. The protein resides in the nucleolus. It carries out the reaction a pseudouridine in rRNA + S-adenosyl-L-methionine = an N(1)-methylpseudouridine in rRNA + S-adenosyl-L-homocysteine + H(+). In terms of biological role, S-adenosyl-L-methionine-dependent pseudouridine N(1)-methyltransferase that methylates a pseudouridine in 18S rRNA. Involved the biosynthesis of the hypermodified N1-methyl-N3-(3-amino-3-carboxypropyl) pseudouridine (m1acp3-Psi) conserved in eukaryotic 18S rRNA. Also has an essential role in 40S ribosomal subunit biogenesis independent on its methyltransferase activity, facilitating the incorporation of ribosomal protein S19 during the formation of pre-ribosomes. The sequence is that of Ribosomal RNA small subunit methyltransferase nep-1 from Caenorhabditis elegans.